We begin with the raw amino-acid sequence, 671 residues long: DNA ligase (671 aa).

NAD(+)-binding positions include 32–36 (DAEYD), 81–82 (SL), and glutamate 113. Lysine 115 acts as the N6-AMP-lysine intermediate in catalysis. NAD(+) contacts are provided by arginine 136, glutamate 173, lysine 290, and lysine 314. Cysteine 408, cysteine 411, cysteine 426, and cysteine 432 together coordinate Zn(2+). A BRCT domain is found at 593–671 (EIDSPFAGKT…EAEMLRLLGS (79 aa)).

This sequence belongs to the NAD-dependent DNA ligase family. LigA subfamily. It depends on Mg(2+) as a cofactor. Mn(2+) is required as a cofactor.

The enzyme catalyses NAD(+) + (deoxyribonucleotide)n-3'-hydroxyl + 5'-phospho-(deoxyribonucleotide)m = (deoxyribonucleotide)n+m + AMP + beta-nicotinamide D-nucleotide.. In terms of biological role, DNA ligase that catalyzes the formation of phosphodiester linkages between 5'-phosphoryl and 3'-hydroxyl groups in double-stranded DNA using NAD as a coenzyme and as the energy source for the reaction. It is essential for DNA replication and repair of damaged DNA. In Escherichia coli (strain ATCC 8739 / DSM 1576 / NBRC 3972 / NCIMB 8545 / WDCM 00012 / Crooks), this protein is DNA ligase.